A 146-amino-acid chain; its full sequence is ATP synthase epsilon chain (146 aa).

It belongs to the ATPase epsilon chain family. F-type ATPases have 2 components, CF(1) - the catalytic core - and CF(0) - the membrane proton channel. CF(1) has five subunits: alpha(3), beta(3), gamma(1), delta(1), epsilon(1). CF(0) has three main subunits: a, b and c.

The protein resides in the cell inner membrane. Its function is as follows. Produces ATP from ADP in the presence of a proton gradient across the membrane. In Rhodospirillum centenum (strain ATCC 51521 / SW), this protein is ATP synthase epsilon chain.